Consider the following 376-residue polypeptide: Queuine tRNA-ribosyltransferase (376 aa).

Asp89 functions as the Proton acceptor in the catalytic mechanism. Residues 89–93 (DSGGF), Asp143, Gln194, and Gly221 contribute to the substrate site. Residues 252–258 (GVGIPSN) are RNA binding. Asp271 serves as the catalytic Nucleophile. The RNA binding; important for wobble base 34 recognition stretch occupies residues 276-280 (ARNGR). The Zn(2+) site is built by Cys309, Cys311, Cys314, and His340.

The protein belongs to the queuine tRNA-ribosyltransferase family. As to quaternary structure, homodimer. Within each dimer, one monomer is responsible for RNA recognition and catalysis, while the other monomer binds to the replacement base PreQ1. Requires Zn(2+) as cofactor.

The catalysed reaction is 7-aminomethyl-7-carbaguanine + guanosine(34) in tRNA = 7-aminomethyl-7-carbaguanosine(34) in tRNA + guanine. The protein operates within tRNA modification; tRNA-queuosine biosynthesis. Functionally, catalyzes the base-exchange of a guanine (G) residue with the queuine precursor 7-aminomethyl-7-deazaguanine (PreQ1) at position 34 (anticodon wobble position) in tRNAs with GU(N) anticodons (tRNA-Asp, -Asn, -His and -Tyr). Catalysis occurs through a double-displacement mechanism. The nucleophile active site attacks the C1' of nucleotide 34 to detach the guanine base from the RNA, forming a covalent enzyme-RNA intermediate. The proton acceptor active site deprotonates the incoming PreQ1, allowing a nucleophilic attack on the C1' of the ribose to form the product. After dissociation, two additional enzymatic reactions on the tRNA convert PreQ1 to queuine (Q), resulting in the hypermodified nucleoside queuosine (7-(((4,5-cis-dihydroxy-2-cyclopenten-1-yl)amino)methyl)-7-deazaguanosine). This Clostridium botulinum (strain Hall / ATCC 3502 / NCTC 13319 / Type A) protein is Queuine tRNA-ribosyltransferase.